The following is a 541-amino-acid chain: GMP synthase [glutamine-hydrolyzing] (541 aa).

In terms of domain architecture, Glutamine amidotransferase type-1 spans 15 to 209 (TILTLDFGSQ…AVNICGCKQN (195 aa)). Cys-91 serves as the catalytic Nucleophile. Residues His-183 and Glu-185 contribute to the active site. A GMPS ATP-PPase domain is found at 210–416 (WTMARFVDQE…LGIAHEMVMR (207 aa)). 238–244 (SGGVDST) is an ATP binding site. XMP-binding residues include Arg-311, Asp-478, Lys-533, and Glu-539.

Homodimer. The cofactor is Mg(2+).

The protein resides in the cytoplasm. It is found in the cytosol. The catalysed reaction is XMP + L-glutamine + ATP + H2O = GMP + L-glutamate + AMP + diphosphate + 2 H(+). Its pathway is purine metabolism; GMP biosynthesis; GMP from XMP (L-Gln route): step 1/1. In terms of biological role, catalyzes the conversion of xanthine monophosphate (XMP) to GMP in the presence of glutamine and ATP through an adenyl-XMP intermediate. The sequence is that of GMP synthase [glutamine-hydrolyzing] (gua1) from Aspergillus oryzae (strain ATCC 42149 / RIB 40) (Yellow koji mold).